The chain runs to 357 residues: CD4+ T-cell-stimulating antigen (357 aa).

Residues 1-22 form the signal peptide; it reads MKKRTFALALSMIIASGVILGA. Cys-23 is lipidated: N-palmitoyl cysteine. The S-diacylglycerol cysteine moiety is linked to residue Cys-23.

It belongs to the BMP lipoprotein family.

It is found in the cell membrane. The protein is CD4+ T-cell-stimulating antigen (tcsA) of Listeria monocytogenes serovar 1/2a (strain ATCC BAA-679 / EGD-e).